A 350-amino-acid polypeptide reads, in one-letter code: Phosphotriesterase-related protein (350 aa).

A divalent metal cation-binding residues include His-22, His-24, Glu-169, His-201, His-230, and Asp-298.

This sequence belongs to the metallo-dependent hydrolases superfamily. Phosphotriesterase family. Requires a divalent metal cation as cofactor.

The protein is Phosphotriesterase-related protein of Drosophila ananassae (Fruit fly).